Reading from the N-terminus, the 220-residue chain is Translation initiation factor 6 (220 aa).

This sequence belongs to the eIF-6 family.

Its function is as follows. Binds to the 50S ribosomal subunit and prevents its association with the 30S ribosomal subunit to form the 70S initiation complex. The sequence is that of Translation initiation factor 6 from Pyrobaculum arsenaticum (strain DSM 13514 / JCM 11321 / PZ6).